A 349-amino-acid polypeptide reads, in one-letter code: N-lysine methyltransferase KMT5A (349 aa).

The tract at residues 18-46 is disordered; it reads AAVAATAPGPEMVEQRGPGRPRSDGENVF. Phosphoserine is present on Ser-57. Residues 65–207 are disordered; that stretch reads RSPLQEENSV…SEERKKNELI (143 aa). The segment covering 107–119 has biased composition (basic and acidic residues); sequence VKSDEQKSKDTRR. At Thr-138 the chain carries Phosphothreonine. Over residues 154–170 the composition is skewed to basic residues; sequence ALKKSLKGKQAPRKKSQ. The segment covering 192–207 has biased composition (basic and acidic residues); the sequence is SKAELQSEERKKNELI. Residues 213-334 enclose the SET domain; that stretch reads EGMKIDLIDG…AGEELLYDYG (122 aa). Residues 223 to 225, Tyr-268, and 295 to 296 each bind S-adenosyl-L-methionine; these read KGR and NH.

The protein belongs to the class V-like SAM-binding methyltransferase superfamily. Histone-lysine methyltransferase family. PR/SET subfamily. Interacts with L3MBTL1. Interacts with SIRT2 (phosphorylated form); the interaction is direct, stimulates KMT5A-mediated methyltransferase activity at histone H4 'Lys-20' (H4K20me1) and is increased in a H(2)O(2)-induced oxidative stress-dependent manner. In terms of processing, ubiquitinated and degraded by the DCX(DTL) complex.

The protein localises to the nucleus. It localises to the chromosome. The enzyme catalyses L-lysyl(20)-[histone H4] + S-adenosyl-L-methionine = N(6)-methyl-L-lysyl(20)-[histone H4] + S-adenosyl-L-homocysteine + H(+). The catalysed reaction is L-lysyl-[protein] + S-adenosyl-L-methionine = N(6)-methyl-L-lysyl-[protein] + S-adenosyl-L-homocysteine + H(+). Functionally, protein-lysine N-methyltransferase that monomethylates both histones and non-histone proteins. Specifically monomethylates 'Lys-20' of histone H4 (H4K20me1). H4K20me1 is enriched during mitosis and represents a specific tag for epigenetic transcriptional repression. Mainly functions in euchromatin regions, thereby playing a central role in the silencing of euchromatic genes. Required for cell proliferation, probably by contributing to the maintenance of proper higher-order structure of DNA during mitosis. Involved in chromosome condensation and proper cytokinesis. Nucleosomes are preferred as substrate compared to free histones. Mediates monomethylation of p53/TP53 at 'Lys-382', leading to repress p53/TP53-target genes. Plays a negative role in TGF-beta response regulation and a positive role in cell migration. This is N-lysine methyltransferase KMT5A from Mus musculus (Mouse).